The chain runs to 363 residues: UDP-N-acetylenolpyruvoylglucosamine reductase (363 aa).

In terms of domain architecture, FAD-binding PCMH-type spans 27–197; it reads LGGWATRVVT…LSVDFRLARS (171 aa). The active site involves Arg175. Residue Ser252 is the Proton donor of the active site. Residue Glu355 is part of the active site.

It belongs to the MurB family. The cofactor is FAD.

The protein localises to the cytoplasm. The enzyme catalyses UDP-N-acetyl-alpha-D-muramate + NADP(+) = UDP-N-acetyl-3-O-(1-carboxyvinyl)-alpha-D-glucosamine + NADPH + H(+). The protein operates within cell wall biogenesis; peptidoglycan biosynthesis. In terms of biological role, cell wall formation. This is UDP-N-acetylenolpyruvoylglucosamine reductase from Salinispora arenicola (strain CNS-205).